The sequence spans 303 residues: Sporulation regulatory protein (303 aa).

The 188-residue stretch at 26-213 (TGRLRAGLRK…HRVNDKQTAE (188 aa)) folds into the FtsK domain. An ATP-binding site is contributed by 43-50 (GANHSGKS).

In terms of biological role, involved in sporulation inhibition and pock formation. The protein is Sporulation regulatory protein (spi) of Streptomyces azureus.